We begin with the raw amino-acid sequence, 566 residues long: Multidrug and toxin extrusion protein 1 (566 aa).

Met-1 is modified (N-acetylmethionine). 13 helical membrane passes run 37 to 57 (LLVLAGPAFLAQLMMFLISFI), 72 to 92 (AVTLAIAVINVTGISVGHGLS), 120 to 140 (LILLLCCFPCWALFINTEQIL), 152 to 172 (LTQTYVMVFIPALPAAFLYTL), 176 to 196 (YLLNQGIVLPQVITGIAANLV), 216 to 236 (ALANTISQFALAIFLFLYILW), 257 to 276 (SFLQLAIPSMLMLCIEWWAY), 295 to 315 (SITYELAIIVYMIPAGFSVAA), 336 to 356 (AISLIVTELFAVTFCVLLLGC), 370 to 390 (IVALVAQVVPIYAVSHLFEAL), 409 to 429 (IVNAIGYYVIGLPIGISLMFV), 437 to 457 (LWSGIIICSVCQTSCFLVFIA), and 543 to 563 (GLLFLGVVLVLVGGILVRVYI).

The protein belongs to the multi antimicrobial extrusion (MATE) (TC 2.A.66.1) family. Highly expressed in kidney and placenta, moderately in stomach, colon, lung, spleen, skeletal muscle and prostate, and slightly in spleen. In the kidney, found in medulla and cortex, especially in the proximal convoluted and straight tubules. No expression was observed in heart, brain, small intestine and liver. Expressed in Sertoli cells in testis.

Its subcellular location is the cell membrane. It localises to the apical cell membrane. The catalysed reaction is thiamine(out) + H(+)(in) = thiamine(in) + H(+)(out). It carries out the reaction estrone 3-sulfate(in) + H(+)(out) = estrone 3-sulfate(out) + H(+)(in). The enzyme catalyses creatinine(in) + H(+)(out) = creatinine(out) + H(+)(in). It catalyses the reaction agmatine(in) + H(+)(out) = agmatine(out) + H(+)(in). In terms of biological role, multidrug efflux pump that functions as a H(+)/organic cation antiporter. Plays a physiological role in the excretion of cationic compounds including endogenous metabolites, drugs, toxins through the kidney and liver, into urine and bile respectively. Mediates the efflux of endogenous compounds such as creatinine, vitamin B1/thiamine, agmatine and estrone-3-sulfate. May also contribute to regulate the transport of cationic compounds in testis across the blood-testis-barrier. The polypeptide is Multidrug and toxin extrusion protein 1 (Slc47a1) (Rattus norvegicus (Rat)).